Consider the following 222-residue polypeptide: Leucyl/phenylalanyl-tRNA--protein transferase (222 aa).

This sequence belongs to the L/F-transferase family.

It is found in the cytoplasm. The enzyme catalyses N-terminal L-lysyl-[protein] + L-leucyl-tRNA(Leu) = N-terminal L-leucyl-L-lysyl-[protein] + tRNA(Leu) + H(+). It carries out the reaction N-terminal L-arginyl-[protein] + L-leucyl-tRNA(Leu) = N-terminal L-leucyl-L-arginyl-[protein] + tRNA(Leu) + H(+). The catalysed reaction is L-phenylalanyl-tRNA(Phe) + an N-terminal L-alpha-aminoacyl-[protein] = an N-terminal L-phenylalanyl-L-alpha-aminoacyl-[protein] + tRNA(Phe). Functions in the N-end rule pathway of protein degradation where it conjugates Leu, Phe and, less efficiently, Met from aminoacyl-tRNAs to the N-termini of proteins containing an N-terminal arginine or lysine. The sequence is that of Leucyl/phenylalanyl-tRNA--protein transferase from Legionella pneumophila (strain Paris).